A 375-amino-acid polypeptide reads, in one-letter code: Trichodiene synthase (375 aa).

It belongs to the trichodiene synthase family.

It catalyses the reaction (2E,6E)-farnesyl diphosphate = trichodiene + diphosphate. Its pathway is sesquiterpene biosynthesis; trichothecene biosynthesis. In terms of biological role, TS is a member of the terpene cyclase group of enzymes. It catalyzes the isomerization and cyclization of farnesyl pyro-phosphate to form trichodiene, the first cyclic intermediate in the biosynthetic pathway for trichothecenes. It serves to branch trichothecene biosynthesis from the isoprenoid pathway. The protein is Trichodiene synthase (TRI5) of Fusarium mesoamericanum.